Consider the following 126-residue polypeptide: MVRLFHNPIKCLFYRGSRKTREKKLRKSLKKLNFYHPPGDCCQIYRLLENVPGGTYFITENMTNELIMIVKDSVDKKIKSVKLNFYGSYIKIHQHYYINIYMYLMRYTQIYKYPLICFNKYSYCNS.

This sequence belongs to the asfivirus MGF 100 family.

Plays a role in virus cell tropism, and may be required for efficient virus replication in macrophages. This is Protein MGF 100-1R from Ornithodoros (relapsing fever ticks).